Here is a 130-residue protein sequence, read N- to C-terminus: Methylglyoxal synthase (130 aa).

The MGS-like domain maps to 1-130 (MSKPRIALIA…DLARNMQDVC (130 aa)). Residues histidine 11, lysine 15, 37–40 (TGTT), and 57–58 (SG) each bind substrate. Aspartate 63 functions as the Proton donor/acceptor in the catalytic mechanism. Histidine 90 is a substrate binding site.

The protein belongs to the methylglyoxal synthase family.

It catalyses the reaction dihydroxyacetone phosphate = methylglyoxal + phosphate. Its function is as follows. Catalyzes the formation of methylglyoxal from dihydroxyacetone phosphate. The protein is Methylglyoxal synthase of Burkholderia orbicola (strain AU 1054).